Here is an 85-residue protein sequence, read N- to C-terminus: Type 3 secretion system needle filament protein (85 aa).

Residues 13–41 are a coiled coil; that stretch reads LDTVANALKEQANAANKDVNDAIKALQGT.

As to quaternary structure, the core secretion machinery of the T3SS is composed of approximately 20 different proteins, including cytoplasmic components, a base, an export apparatus and a needle. This subunit polymerizes and forms the helical needle filament. Forms a stable heterotrimeric complex with PscE and PscG in the cytoplasm, blocking it in a monomeric state and preventing its polymerization.

The protein resides in the secreted. It is found in the cell surface. Component of the type III secretion system (T3SS), also called injectisome, which is used to inject bacterial effector proteins into eukaryotic host cells, facilitating the establishment and dissemination of infection. PscF/SctF forms the external needle filament that protrudes from the bacterial surface. The chain is Type 3 secretion system needle filament protein from Pseudomonas aeruginosa (strain ATCC 15692 / DSM 22644 / CIP 104116 / JCM 14847 / LMG 12228 / 1C / PRS 101 / PAO1).